A 388-amino-acid polypeptide reads, in one-letter code: LL-diaminopimelate aminotransferase (388 aa).

2 residues coordinate substrate: Tyr15 and Gly40. Pyridoxal 5'-phosphate is bound by residues Tyr69, 103–104 (SK), Tyr128, Asn178, Tyr209, and 237–239 (SLS). Substrate-binding residues include Lys104, Tyr128, and Asn178. Lys240 carries the N6-(pyridoxal phosphate)lysine modification. Pyridoxal 5'-phosphate is bound at residue Arg248. Position 366 (Arg366) interacts with substrate.

The protein belongs to the class-I pyridoxal-phosphate-dependent aminotransferase family. LL-diaminopimelate aminotransferase subfamily. Homodimer. Pyridoxal 5'-phosphate is required as a cofactor.

The catalysed reaction is (2S,6S)-2,6-diaminopimelate + 2-oxoglutarate = (S)-2,3,4,5-tetrahydrodipicolinate + L-glutamate + H2O + H(+). The protein operates within amino-acid biosynthesis; L-lysine biosynthesis via DAP pathway; LL-2,6-diaminopimelate from (S)-tetrahydrodipicolinate (aminotransferase route): step 1/1. Involved in the synthesis of meso-diaminopimelate (m-DAP or DL-DAP), required for both lysine and peptidoglycan biosynthesis. Catalyzes the direct conversion of tetrahydrodipicolinate to LL-diaminopimelate. Can also use m-DAP instead of LL-DAP as the amino-group donor. The polypeptide is LL-diaminopimelate aminotransferase (Syntrophobacter fumaroxidans (strain DSM 10017 / MPOB)).